The sequence spans 198 residues: Charged multivesicular body protein 2a homolog 2 (198 aa).

A coiled-coil region spans residues 11–42 (KEVLRENQRNLNKSMREIDRERVALQNQEKKI).

Belongs to the SNF7 family. As to quaternary structure, probable core component of the endosomal sorting required for transport complex III (ESCRT-III). ESCRT-III components are thought to multimerize to form a flat lattice on the perimeter membrane of the endosome.

The protein resides in the endosome membrane. Functionally, probable core component of the endosomal sorting required for transport complex III (ESCRT-III) which is involved in multivesicular bodies (MVBs) formation and sorting of endosomal cargo proteins into MVBs. MVBs contain intraluminal vesicles (ILVs) that are generated by invagination and scission from the limiting membrane of the endosome and are delivered to lysosomes enabling degradation of membrane proteins. This Dictyostelium discoideum (Social amoeba) protein is Charged multivesicular body protein 2a homolog 2 (chmp2a2).